Reading from the N-terminus, the 444-residue chain is Chromosome partition protein MukF (444 aa).

Positions 212–240 (LDETSGNLRELQDTLNAAGDKLQAQLLRI) are leucine-zipper.

It belongs to the MukF family. Interacts, and probably forms a ternary complex, with MukE and MukB via its C-terminal region. The complex formation is stimulated by calcium or magnesium. It is required for an interaction between MukE and MukB.

It is found in the cytoplasm. Its subcellular location is the nucleoid. Functionally, involved in chromosome condensation, segregation and cell cycle progression. May participate in facilitating chromosome segregation by condensation DNA from both sides of a centrally located replisome during cell division. Not required for mini-F plasmid partitioning. Probably acts via its interaction with MukB and MukE. Overexpression results in anucleate cells. It has a calcium binding activity. The polypeptide is Chromosome partition protein MukF (Haemophilus influenzae (strain PittEE)).